The sequence spans 211 residues: Protein-L-isoaspartate O-methyltransferase (211 aa).

Ser60 is a catalytic residue.

Belongs to the methyltransferase superfamily. L-isoaspartyl/D-aspartyl protein methyltransferase family.

Its subcellular location is the cytoplasm. It catalyses the reaction [protein]-L-isoaspartate + S-adenosyl-L-methionine = [protein]-L-isoaspartate alpha-methyl ester + S-adenosyl-L-homocysteine. Catalyzes the methyl esterification of L-isoaspartyl residues in peptides and proteins that result from spontaneous decomposition of normal L-aspartyl and L-asparaginyl residues. It plays a role in the repair and/or degradation of damaged proteins. This Pseudomonas syringae pv. tomato (strain ATCC BAA-871 / DC3000) protein is Protein-L-isoaspartate O-methyltransferase.